The primary structure comprises 231 residues: NADH-ubiquinone oxidoreductase chain 4 (231 aa).

6 consecutive transmembrane segments (helical) span residues 1-21 (PIAG…YGII), 34-54 (MFLP…LTCL), 63-85 (IAYS…TPWG), 89-111 (ALAL…NTTY), 128-148 (ILPM…AIPP), and 169-189 (TIIM…HMFL).

The protein belongs to the complex I subunit 4 family.

The protein localises to the mitochondrion membrane. It catalyses the reaction a ubiquinone + NADH + 5 H(+)(in) = a ubiquinol + NAD(+) + 4 H(+)(out). In terms of biological role, core subunit of the mitochondrial membrane respiratory chain NADH dehydrogenase (Complex I) that is believed to belong to the minimal assembly required for catalysis. Complex I functions in the transfer of electrons from NADH to the respiratory chain. The immediate electron acceptor for the enzyme is believed to be ubiquinone. The chain is NADH-ubiquinone oxidoreductase chain 4 (MT-ND4) from Bothrocophias hyoprora (Amazonian hognose viper).